The primary structure comprises 43 residues: MEAALLVEKNLNQALLDLHGLASARGDPHICDFLENHFLDEEV.

The region spanning 1–43 (MEAALLVEKNLNQALLDLHGLASARGDPHICDFLENHFLDEEV) is the Ferritin-like diiron domain.

The protein belongs to the ferritin family. As to quaternary structure, oligomer of 24 subunits. There are two types of subunits: L (light) chain and H (heavy) chain. The major chain can be light or heavy, depending on the species and tissue type. The functional molecule forms a roughly spherical shell with a diameter of 12 nm and contains a central cavity into which the insoluble mineral iron core is deposited. Interacts with NCOA4.

It localises to the cytoplasmic vesicle. The protein resides in the autophagosome. It is found in the cytoplasm. Its subcellular location is the autolysosome. Functionally, stores iron in a soluble, non-toxic, readily available form. Important for iron homeostasis. Iron is taken up in the ferrous form and deposited as ferric hydroxides after oxidation. Also plays a role in delivery of iron to cells. Mediates iron uptake in capsule cells of the developing kidney. Delivery to lysosomes by the cargo receptor NCOA4 for autophagic degradation and release or iron. In Ovis aries (Sheep), this protein is Ferritin light chain (FTL).